Here is a 497-residue protein sequence, read N- to C-terminus: Protein nucleotidyltransferase YdiU (497 aa).

ATP-binding residues include G92, G94, R95, K114, D126, G127, R177, and R184. D261 functions as the Proton acceptor in the catalytic mechanism. The Mg(2+) site is built by N262 and D271. Residue D271 participates in ATP binding.

This sequence belongs to the SELO family. Requires Mg(2+) as cofactor. The cofactor is Mn(2+).

It carries out the reaction L-seryl-[protein] + ATP = 3-O-(5'-adenylyl)-L-seryl-[protein] + diphosphate. The enzyme catalyses L-threonyl-[protein] + ATP = 3-O-(5'-adenylyl)-L-threonyl-[protein] + diphosphate. The catalysed reaction is L-tyrosyl-[protein] + ATP = O-(5'-adenylyl)-L-tyrosyl-[protein] + diphosphate. It catalyses the reaction L-histidyl-[protein] + UTP = N(tele)-(5'-uridylyl)-L-histidyl-[protein] + diphosphate. It carries out the reaction L-seryl-[protein] + UTP = O-(5'-uridylyl)-L-seryl-[protein] + diphosphate. The enzyme catalyses L-tyrosyl-[protein] + UTP = O-(5'-uridylyl)-L-tyrosyl-[protein] + diphosphate. Functionally, nucleotidyltransferase involved in the post-translational modification of proteins. It can catalyze the addition of adenosine monophosphate (AMP) or uridine monophosphate (UMP) to a protein, resulting in modifications known as AMPylation and UMPylation. The protein is Protein nucleotidyltransferase YdiU of Bordetella petrii (strain ATCC BAA-461 / DSM 12804 / CCUG 43448).